The sequence spans 470 residues: Iron-sulfur cluster assembly protein SufB (470 aa).

Belongs to the iron-sulfur cluster assembly SufBD family. Component of a complex composed of SufB, SufC and SufD in a stoichiometric ratio of 1:2:1. Interacts with SufC. Interacts with SufD.

Its pathway is cofactor biosynthesis; iron-sulfur cluster biosynthesis. Its function is as follows. Participates in the sulfur mobilization (SUF) pathway for iron-sulfur (Fe-S) cluster biogenesis. As part of a complex consisting of SufB-SufC(2)-SufD, involved in assembly of [4Fe-4S] clusters. Exhibits ATPase activity. This is Iron-sulfur cluster assembly protein SufB from Plasmodium falciparum (isolate 3D7).